The primary structure comprises 82 residues: Turripeptide Gdm9.1 (82 aa).

A signal peptide spans 1–23 (MMAKLMITVMMVLLLSLQQGADG). Positions 24-46 (RSERWRKNQMAASRIMRNLITAR) are excised as a propeptide. 4-hydroxyproline occurs at positions 49 and 50. 3 disulfides stabilise this stretch: Cys-53–Cys-68, Cys-58–Cys-72, and Cys-64–Cys-79. 4-carboxyglutamate is present on residues Glu-60 and Glu-63.

It belongs to the Pg turripeptide superfamily. In terms of tissue distribution, expressed by the venom duct.

It is found in the secreted. This chain is Turripeptide Gdm9.1, found in Gemmula diomedea (Gem-turris).